The following is a 38-amino-acid chain: Histone H5 (38 aa).

A compositionally biased stretch (pro residues) spans 1–15; it reads TESPIPVPAPAPAAK. Positions 1–38 are disordered; that stretch reads TESPIPVPAPAPAAKPKPKRVSKRPASHPPYSDMIAAA. Residues 16 to 26 show a composition bias toward basic residues; that stretch reads PKPKRVSKRPA.

It belongs to the histone H1/H5 family. Erythroid cells.

It localises to the nucleus. The protein localises to the chromosome. Histone H5 performs the same function as H1, being necessary for the condensation of nucleosome chains into higher order structures, and replaces histone H1 in certain cells. This is Histone H5 from Columba livia (Rock dove).